Consider the following 430-residue polypeptide: tRNA(Ile)-lysidine synthase (430 aa).

Residue 27-32 (SGGSDS) participates in ATP binding.

It belongs to the tRNA(Ile)-lysidine synthase family.

The protein resides in the cytoplasm. It catalyses the reaction cytidine(34) in tRNA(Ile2) + L-lysine + ATP = lysidine(34) in tRNA(Ile2) + AMP + diphosphate + H(+). Its function is as follows. Ligates lysine onto the cytidine present at position 34 of the AUA codon-specific tRNA(Ile) that contains the anticodon CAU, in an ATP-dependent manner. Cytidine is converted to lysidine, thus changing the amino acid specificity of the tRNA from methionine to isoleucine. This Rickettsia typhi (strain ATCC VR-144 / Wilmington) protein is tRNA(Ile)-lysidine synthase.